Here is a 420-residue protein sequence, read N- to C-terminus: Light-independent protochlorophyllide reductase subunit N (420 aa).

[4Fe-4S] cluster is bound by residues Cys21, Cys46, and Cys103.

This sequence belongs to the BchN/ChlN family. Protochlorophyllide reductase is composed of three subunits; BchL, BchN and BchB. Forms a heterotetramer of two BchB and two BchN subunits. [4Fe-4S] cluster is required as a cofactor.

It catalyses the reaction chlorophyllide a + oxidized 2[4Fe-4S]-[ferredoxin] + 2 ADP + 2 phosphate = protochlorophyllide a + reduced 2[4Fe-4S]-[ferredoxin] + 2 ATP + 2 H2O. It participates in porphyrin-containing compound metabolism; bacteriochlorophyll biosynthesis (light-independent). Its function is as follows. Component of the dark-operative protochlorophyllide reductase (DPOR) that uses Mg-ATP and reduced ferredoxin to reduce ring D of protochlorophyllide (Pchlide) to form chlorophyllide a (Chlide). This reaction is light-independent. The NB-protein (BchN-BchB) is the catalytic component of the complex. The sequence is that of Light-independent protochlorophyllide reductase subunit N from Chlorobium luteolum (strain DSM 273 / BCRC 81028 / 2530) (Pelodictyon luteolum).